A 205-amino-acid chain; its full sequence is Transcription termination/antitermination protein NusG (205 aa).

A KOW domain is found at 154–178 (GDHIMVLSGPFKDFEGDVIEVSPER).

The protein belongs to the NusG family.

Participates in transcription elongation, termination and antitermination. This chain is Transcription termination/antitermination protein NusG, found in Synechocystis sp. (strain ATCC 27184 / PCC 6803 / Kazusa).